A 288-amino-acid polypeptide reads, in one-letter code: Orotidine 5'-phosphate decarboxylase (288 aa).

Lys-97 functions as the Proton donor in the catalytic mechanism.

It belongs to the OMP decarboxylase family. Type 2 subfamily.

The catalysed reaction is orotidine 5'-phosphate + H(+) = UMP + CO2. Its pathway is pyrimidine metabolism; UMP biosynthesis via de novo pathway; UMP from orotate: step 2/2. The protein is Orotidine 5'-phosphate decarboxylase of Clostridium tetani (strain Massachusetts / E88).